Reading from the N-terminus, the 518-residue chain is Gypsy retrotransposon integrase-like protein 1 (518 aa).

The region spanning 135–293 (VVGNPWSVVT…PYFQMFNRNP (159 aa)) is the Integrase catalytic domain. The interval 326-348 (NQTPAAGQMESSTSEELSKSKVA) is disordered. Ser-498 carries the phosphoserine modification.

This chain is Gypsy retrotransposon integrase-like protein 1 (GIN1), found in Rattus norvegicus (Rat).